Consider the following 232-residue polypeptide: Ribose-5-phosphate isomerase A (232 aa).

Residues 31–34, 88–91, and 101–104 contribute to the substrate site; these read TGST, DGAD, and KGGG. Glu-110 functions as the Proton acceptor in the catalytic mechanism. Residue Lys-128 participates in substrate binding.

Belongs to the ribose 5-phosphate isomerase family. As to quaternary structure, homodimer.

It catalyses the reaction aldehydo-D-ribose 5-phosphate = D-ribulose 5-phosphate. It functions in the pathway carbohydrate degradation; pentose phosphate pathway; D-ribose 5-phosphate from D-ribulose 5-phosphate (non-oxidative stage): step 1/1. Its function is as follows. Catalyzes the reversible conversion of ribose-5-phosphate to ribulose 5-phosphate. This chain is Ribose-5-phosphate isomerase A, found in Lactobacillus johnsonii (strain CNCM I-12250 / La1 / NCC 533).